The chain runs to 231 residues: DNA mismatch repair protein MutH (231 aa).

Belongs to the MutH family.

It localises to the cytoplasm. In terms of biological role, sequence-specific endonuclease that cleaves unmethylated GATC sequences. It is involved in DNA mismatch repair. This is DNA mismatch repair protein MutH from Salmonella paratyphi A (strain ATCC 9150 / SARB42).